We begin with the raw amino-acid sequence, 345 residues long: MVHNKNNTILKMIKGEETSHTPVWFMRQAGRSQPEYRKLKEKYSLFDITHQPELCAYVTHLPVDNYHTDAAILYKDIMTPLKPIGVDVEIKSGIGPVIHNPIKTIQDVEKLSQIDPERDVPYVLDTIKLLTEEKLNVPLIGFTGAPFTLASYMIEGGPSKNYNFTKAMMYRDEATWFALMNHLVDVSVKYVTAQVEAGAELIQIFDSWVGALNVEDYRRYIKPHMIRLISEVKEKHDVPVILFGVGASHLINEWNDLPIDVLGLDWRTSINQAQQLGVTKTLQGNLDPSILLAPWNVIEERLKPILDQGMENGKHIFNLGHGVFPEVQPETLRKVSEFVHTYTQR.

Substrate is bound by residues 27 to 31, F46, D76, Y152, S207, and H321; that span reads RQAGR.

It belongs to the uroporphyrinogen decarboxylase family. Homodimer.

The protein localises to the cytoplasm. It carries out the reaction uroporphyrinogen III + 4 H(+) = coproporphyrinogen III + 4 CO2. It participates in porphyrin-containing compound metabolism; protoporphyrin-IX biosynthesis; coproporphyrinogen-III from 5-aminolevulinate: step 4/4. Catalyzes the decarboxylation of four acetate groups of uroporphyrinogen-III to yield coproporphyrinogen-III. The chain is Uroporphyrinogen decarboxylase from Staphylococcus aureus (strain Mu3 / ATCC 700698).